The following is a 228-amino-acid chain: Sugar fermentation stimulation protein homolog (228 aa).

Belongs to the SfsA family.

In Desulfitobacterium hafniense (strain Y51), this protein is Sugar fermentation stimulation protein homolog.